The primary structure comprises 120 residues: C-C motif chemokine 16 (120 aa).

A signal peptide spans Met-1–Ser-23. Intrachain disulfides connect Cys-37–Cys-60 and Cys-38–Cys-76.

It belongs to the intercrine beta (chemokine CC) family. Mainly expressed in liver, also found in spleen and thymus. Highly expressed in LPS- and IFN-gamma-activated monocytes, weakly in some lymphocytes, including natural killer cells, gamma-delta T-cells, and some T-cell clones.

Its subcellular location is the secreted. Shows chemotactic activity for lymphocytes and monocytes but not neutrophils. Also shows potent myelosuppressive activity, suppresses proliferation of myeloid progenitor cells. Recombinant SCYA16 shows chemotactic activity for monocytes and THP-1 monocytes, but not for resting lymphocytes and neutrophils. Induces a calcium flux in THP-1 cells that were desensitized by prior expression to RANTES. This Homo sapiens (Human) protein is C-C motif chemokine 16 (CCL16).